Consider the following 242-residue polypeptide: DnaJ homolog subfamily B member 3 (242 aa).

The J domain occupies 1-69 (MANYYEVLGV…KKRDVYDRYG (69 aa)).

As to expression, testis specific.

May operate as a co-chaperone of the male germ cell- and haploid stage-specific Hsp70 proteins. The sequence is that of DnaJ homolog subfamily B member 3 (DNAJB3) from Macaca fuscata fuscata (Japanese macaque).